Consider the following 374-residue polypeptide: PqqA peptide cyclase (374 aa).

Residues V7–A222 form the Radical SAM core domain. [4Fe-4S] cluster contacts are provided by C21, C25, and C28.

The protein belongs to the radical SAM superfamily. PqqE family. As to quaternary structure, interacts with PqqD. The interaction is necessary for activity of PqqE. The cofactor is [4Fe-4S] cluster.

The enzyme catalyses [PQQ precursor protein] + S-adenosyl-L-methionine = E-Y cross-linked-[PQQ precursor protein] + 5'-deoxyadenosine + L-methionine + H(+). Its pathway is cofactor biosynthesis; pyrroloquinoline quinone biosynthesis. Catalyzes the cross-linking of a glutamate residue and a tyrosine residue in the PqqA protein as part of the biosynthesis of pyrroloquinoline quinone (PQQ). This chain is PqqA peptide cyclase, found in Kluyvera intermedia (Enterobacter intermedius).